The sequence spans 311 residues: MKPRKVMIIGAGNVGTAAAHAFVNQKFVEELILVDLNKERVEGNRKDLADAAAFMPGKMDITVRDASDCADVDIAVITVTAGPLKEGQTRLDELRSTSRIVSGIVPEMMKGGFNGIFLIATNPCDIITYQVWKLSGLPRERVLGTGVWLDTTRLRRLLAEKLDIAAQSIDAFILGEHGDSQFPVWSHSSIYGKPVNEYSLEKLGESLDLKQIGETARDTGFEIYHQKGCTEYGIGGTIVEICRHIFSGSQRALTVSCVLDGEYGESGLAIGVPAVLSQNGVKEIISLKLDEQEQQAFANSVSVIKKSIASI.

3 residues coordinate NAD(+): valine 14, aspartate 35, and arginine 40. Substrate is bound by residues arginine 90 and 122–125 (NPCD). Residues 120-122 (ATN) and threonine 145 each bind NAD(+). 150 to 153 (DTTR) contributes to the substrate binding site. The Proton acceptor role is filled by histidine 177. Threonine 230 provides a ligand contact to substrate.

Belongs to the LDH/MDH superfamily. LDH family. In terms of assembly, homotetramer.

It is found in the cytoplasm. The enzyme catalyses (S)-lactate + NAD(+) = pyruvate + NADH + H(+). It participates in fermentation; pyruvate fermentation to lactate; (S)-lactate from pyruvate: step 1/1. Its function is as follows. Catalyzes the conversion of lactate to pyruvate. This Listeria monocytogenes serovar 1/2a (strain ATCC BAA-679 / EGD-e) protein is L-lactate dehydrogenase 2.